Here is a 120-residue protein sequence, read N- to C-terminus: Large ribosomal subunit protein uL18 (120 aa).

It belongs to the universal ribosomal protein uL18 family. In terms of assembly, part of the 50S ribosomal subunit; part of the 5S rRNA/L5/L18/L25 subcomplex. Contacts the 5S and 23S rRNAs.

In terms of biological role, this is one of the proteins that bind and probably mediate the attachment of the 5S RNA into the large ribosomal subunit, where it forms part of the central protuberance. The polypeptide is Large ribosomal subunit protein uL18 (Bordetella bronchiseptica (strain ATCC BAA-588 / NCTC 13252 / RB50) (Alcaligenes bronchisepticus)).